A 210-amino-acid polypeptide reads, in one-letter code: Large ribosomal subunit protein uL4 (210 aa).

The span at 44–54 (KRQGTASTLTR) shows a compositional bias: polar residues. The segment at 44–94 (KRQGTASTLTRSEVRGGGRKPYKQKGTGRARQGSIRTPLRPGGGVIFGPKP) is disordered. A compositionally biased stretch (basic residues) spans 60-71 (GGRKPYKQKGTG).

The protein belongs to the universal ribosomal protein uL4 family. In terms of assembly, part of the 50S ribosomal subunit.

Its function is as follows. One of the primary rRNA binding proteins, this protein initially binds near the 5'-end of the 23S rRNA. It is important during the early stages of 50S assembly. It makes multiple contacts with different domains of the 23S rRNA in the assembled 50S subunit and ribosome. Functionally, forms part of the polypeptide exit tunnel. This Prochlorococcus marinus subsp. pastoris (strain CCMP1986 / NIES-2087 / MED4) protein is Large ribosomal subunit protein uL4.